Reading from the N-terminus, the 203-residue chain is Proline-rich protein 1 (203 aa).

An N-terminal signal peptide occupies residues 1 to 20 (MMKLGLYLTLLFLSVWTVSG).

As to expression, component of the acid-insoluble and acid-soluble organic matrix of calcified layers of the shell (at protein level).

It is found in the secreted. This is Proline-rich protein 1 from Lottia gigantea (Giant owl limpet).